Consider the following 383-residue polypeptide: BRISC and BRCA1-A complex member 2 (383 aa).

Met1 carries the post-translational modification N-acetylmethionine. Phosphoserine is present on Ser2. UEV-like regions lie at residues 30-147 (DATN…TLLE) and 275-364 (IAAF…RAKA).

Belongs to the BABAM2 family. In terms of assembly, component of the ARISC complex, at least composed of UIMC1/RAP80, ABRAXAS1, BRCC3/BRCC36, BABAM2 and BABAM1/NBA1. Component of the BRCA1-A complex, at least composed of BRCA1, BARD1, UIMC1/RAP80, ABRAXAS1, BRCC3/BRCC36, BABAM2 and BABAM1/NBA1. In the BRCA1-A complex, interacts directly with ABRAXAS1, BRCC3/BRCC36 and BABAM1/NBA1. Binds polyubiquitin. Component of the BRISC complex, at least composed of ABRAXAS2, BRCC3/BRCC36, BABAM2 and BABAM1/NBA1. Identified in a complex with SHMT2 and the other subunits of the BRISC complex. Component of the BRCA1/BRCA2 containing complex (BRCC), which also contains BRCA1, BRCA2, BARD1, BRCC3/BRCC36 and RAD51. BRCC is a ubiquitin E3 ligase complex that enhances cellular survival following DNA damage. May interact with FAS and TNFRSF1A.

The protein localises to the cytoplasm. It localises to the nucleus. Functionally, component of the BRCA1-A complex, a complex that specifically recognizes 'Lys-63'-linked ubiquitinated histones H2A and H2AX at DNA lesions sites, leading to target the BRCA1-BARD1 heterodimer to sites of DNA damage at double-strand breaks (DSBs). The BRCA1-A complex also possesses deubiquitinase activity that specifically removes 'Lys-63'-linked ubiquitin on histones H2A and H2AX. In the BRCA1-A complex, it acts as an adapter that bridges the interaction between BABAM1/NBA1 and the rest of the complex, thereby being required for the complex integrity and modulating the E3 ubiquitin ligase activity of the BRCA1-BARD1 heterodimer. Component of the BRISC complex, a multiprotein complex that specifically cleaves 'Lys-63'-linked ubiquitin in various substrates. Within the BRISC complex, acts as an adapter that bridges the interaction between BABAM1/NBA1 and the rest of the complex, thereby being required for the complex integrity. The BRISC complex is required for normal mitotic spindle assembly and microtubule attachment to kinetochores via its role in deubiquitinating NUMA1. The BRISC complex plays a role in interferon signaling via its role in the deubiquitination of the interferon receptor IFNAR1; deubiquitination increases IFNAR1 activity by enhancing its stability and cell surface expression. Down-regulates the response to bacterial lipopolysaccharide (LPS) via its role in IFNAR1 deubiquitination. May play a role in homeostasis or cellular differentiation in cells of neural, epithelial and germline origins. May also act as a death receptor-associated anti-apoptotic protein, which inhibits the mitochondrial apoptotic pathway. May regulate TNF-alpha signaling through its interactions with TNFRSF1A; however these effects may be indirect. In Rattus norvegicus (Rat), this protein is BRISC and BRCA1-A complex member 2.